The sequence spans 367 residues: MAGSSYGNIFKVTTWGESHGKGLGVVVDGVPAGLELCEEDIQIFLNRRKPGQSKFTTPRKEDDTVEILSGVFEGKTTGTPVSMVVWNKNQKSKDYSEIASYYRPGHADFCFDEKYGFRDYRGGGRSSGRETIGRVAAGAIAVKMLSSLGIKFLTYTRSIGPVTINEVNFDAHEIYNNSLYMPDSDAAQKASEYLDECLKSLNSSGGVCECVITGLPVGLGDPVFEKIDANLAKAIMSIGAVKGFEIGDGFDAAKATGLTNNDAFIMMDGAVSKETNHSGGTLGGMTDGSPLIFRAAIKPTPSIAATQHTVNKSGEDIEISIKGRHDPIIVPRAVVVVEAMAAITIADALLMNMGARMDRITDFYKKL.

Arg48 is a binding site for NADP(+). FMN-binding positions include 125-127 (RSS), Gly283, 298-302 (KPTPS), and Arg324.

This sequence belongs to the chorismate synthase family. As to quaternary structure, homotetramer. FMNH2 is required as a cofactor.

The enzyme catalyses 5-O-(1-carboxyvinyl)-3-phosphoshikimate = chorismate + phosphate. It functions in the pathway metabolic intermediate biosynthesis; chorismate biosynthesis; chorismate from D-erythrose 4-phosphate and phosphoenolpyruvate: step 7/7. In terms of biological role, catalyzes the anti-1,4-elimination of the C-3 phosphate and the C-6 proR hydrogen from 5-enolpyruvylshikimate-3-phosphate (EPSP) to yield chorismate, which is the branch point compound that serves as the starting substrate for the three terminal pathways of aromatic amino acid biosynthesis. This reaction introduces a second double bond into the aromatic ring system. The protein is Chorismate synthase of Agathobacter rectalis (strain ATCC 33656 / DSM 3377 / JCM 17463 / KCTC 5835 / VPI 0990) (Eubacterium rectale).